We begin with the raw amino-acid sequence, 282 residues long: Bis(5'-nucleosyl)-tetraphosphatase, symmetrical (282 aa).

The protein belongs to the Ap4A hydrolase family.

The catalysed reaction is P(1),P(4)-bis(5'-adenosyl) tetraphosphate + H2O = 2 ADP + 2 H(+). Its function is as follows. Hydrolyzes diadenosine 5',5'''-P1,P4-tetraphosphate to yield ADP. This chain is Bis(5'-nucleosyl)-tetraphosphatase, symmetrical, found in Burkholderia mallei (strain NCTC 10247).